Consider the following 647-residue polypeptide: Bifunctional enzyme CysN/CysC (647 aa).

Residues 1–472 (MSHQSDLIAT…TEERAARFGQ (472 aa)) form a sulfate adenylyltransferase region. Residues 22 to 239 (KQLLRFITCG…LETVYIGSDR (218 aa)) enclose the tr-type G domain. The tract at residues 31 to 38 (GSVDDGKS) is G1. Residue 31 to 38 (GSVDDGKS) participates in GTP binding. The G2 stretch occupies residues 89–93 (GITID). The tract at residues 110–113 (DTPG) is G3. GTP is bound by residues 110 to 114 (DTPGH) and 165 to 168 (NKMD). The G4 stretch occupies residues 165–168 (NKMD). The interval 204-206 (SAL) is G5. Positions 473–614 (KPATVLLTGL…FPGVTAKYDV (142 aa)) are adenylyl-sulfate kinase. ATP is bound at residue 481–488 (GLTGSGKT).

This sequence in the C-terminal section; belongs to the APS kinase family. The protein in the N-terminal section; belongs to the TRAFAC class translation factor GTPase superfamily. Classic translation factor GTPase family. CysN/NodQ subfamily. As to quaternary structure, heterodimer composed of CysD, the smaller subunit, and CysNC.

The enzyme catalyses sulfate + ATP + H(+) = adenosine 5'-phosphosulfate + diphosphate. It catalyses the reaction adenosine 5'-phosphosulfate + ATP = 3'-phosphoadenylyl sulfate + ADP + H(+). The protein operates within sulfur metabolism; hydrogen sulfide biosynthesis; sulfite from sulfate: step 1/3. It functions in the pathway sulfur metabolism; hydrogen sulfide biosynthesis; sulfite from sulfate: step 2/3. Its function is as follows. With CysD forms the ATP sulfurylase (ATPS) that catalyzes the adenylation of sulfate producing adenosine 5'-phosphosulfate (APS) and diphosphate, the first enzymatic step in sulfur assimilation pathway. APS synthesis involves the formation of a high-energy phosphoric-sulfuric acid anhydride bond driven by GTP hydrolysis by CysN coupled to ATP hydrolysis by CysD. APS kinase catalyzes the synthesis of activated sulfate. In Rhodopirellula baltica (strain DSM 10527 / NCIMB 13988 / SH1), this protein is Bifunctional enzyme CysN/CysC (cysNC).